The primary structure comprises 410 residues: Large ribosomal subunit protein uL4 (410 aa).

Belongs to the universal ribosomal protein uL4 family.

It is found in the cytoplasm. The protein is Large ribosomal subunit protein uL4 (RPL4) of Tetrahymena thermophila (strain SB210).